The primary structure comprises 476 residues: Cysteine--tRNA ligase (476 aa).

C27 contributes to the Zn(2+) binding site. The 'HIGH' region signature appears at 29–39 (PTTYNYIHLGN). Zn(2+)-binding residues include C207, H232, and E236. The short motif at 264 to 268 (KMSKS) is the 'KMSKS' region element. Position 267 (K267) interacts with ATP.

Belongs to the class-I aminoacyl-tRNA synthetase family. Monomer. It depends on Zn(2+) as a cofactor.

The protein resides in the cytoplasm. It catalyses the reaction tRNA(Cys) + L-cysteine + ATP = L-cysteinyl-tRNA(Cys) + AMP + diphosphate. This Moorella thermoacetica (strain ATCC 39073 / JCM 9320) protein is Cysteine--tRNA ligase.